A 216-amino-acid chain; its full sequence is Flavin prenyltransferase UbiX (216 aa).

Residues 9 to 11 (GAS), Ser35, and Arg144 each bind FMN. The dimethylallyl phosphate site is built by Tyr174 and Arg190.

Belongs to the UbiX/PAD1 family.

It carries out the reaction dimethylallyl phosphate + FMNH2 = prenylated FMNH2 + phosphate. Its function is as follows. Flavin prenyltransferase that catalyzes the synthesis of the prenylated FMN cofactor (prenyl-FMN) for 4-hydroxy-3-polyprenylbenzoic acid decarboxylase UbiD. The prenyltransferase is metal-independent and links a dimethylallyl moiety from dimethylallyl monophosphate (DMAP) to the flavin N5 and C6 atoms of FMN. In Streptomyces coelicolor (strain ATCC BAA-471 / A3(2) / M145), this protein is Flavin prenyltransferase UbiX.